Consider the following 93-residue polypeptide: Small ribosomal subunit protein uS15 (93 aa).

This sequence belongs to the universal ribosomal protein uS15 family. In terms of assembly, part of the 30S ribosomal subunit. Forms a bridge to the 50S subunit in the 70S ribosome, contacting the 23S rRNA.

One of the primary rRNA binding proteins, it binds directly to 16S rRNA where it helps nucleate assembly of the platform of the 30S subunit by binding and bridging several RNA helices of the 16S rRNA. Functionally, forms an intersubunit bridge (bridge B4) with the 23S rRNA of the 50S subunit in the ribosome. The polypeptide is Small ribosomal subunit protein uS15 (Anaplasma marginale (strain St. Maries)).